The primary structure comprises 326 residues: Putative [LysW]-lysine/[LysW]-ornithine hydrolase (326 aa).

His66 contributes to the Zn(2+) binding site. Asp68 is a catalytic residue. Position 90 (Asp90) interacts with Zn(2+). The active-site Proton acceptor is Glu117. Residues Glu118, Glu139, and His297 each coordinate Zn(2+).

Belongs to the peptidase M20A family. LysK subfamily. It depends on Zn(2+) as a cofactor. The cofactor is Co(2+).

The protein resides in the cytoplasm. It catalyses the reaction [amino-group carrier protein]-C-terminal-gamma-(L-lysyl)-L-glutamate + H2O = [amino-group carrier protein]-C-terminal-L-glutamate + L-lysine. The enzyme catalyses [amino-group carrier protein]-C-terminal-gamma-(L-ornithyl)-L-glutamate + H2O = [amino-group carrier protein]-C-terminal-L-glutamate + L-ornithine. It participates in amino-acid biosynthesis; L-lysine biosynthesis via AAA pathway; L-lysine from L-alpha-aminoadipate (Thermus route): step 5/5. It functions in the pathway amino-acid biosynthesis; L-arginine biosynthesis. Its function is as follows. Catalyzes the release of L-lysine from [LysW]-gamma-L-lysine and the release of L-ornithine from [LysW]-L-ornithine. The chain is Putative [LysW]-lysine/[LysW]-ornithine hydrolase from Pyrococcus furiosus (strain ATCC 43587 / DSM 3638 / JCM 8422 / Vc1).